The primary structure comprises 254 residues: uncharacterized protein (254 aa).

Belongs to the methyltransferase superfamily.

This is an uncharacterized protein from Mycobacterium tuberculosis (strain ATCC 25177 / H37Ra).